The sequence spans 755 residues: Photosystem I P700 chlorophyll a apoprotein A1 (755 aa).

The next 8 helical transmembrane spans lie at 72–95 (IFSA…FHGA), 158–181 (LYCT…FHYH), 197–221 (LNHH…HVSL), 297–315 (TAHH…GHMY), 352–375 (WHAQ…QHMY), 391–417 (LSLF…IFMV), 439–461 (AIIS…LYVH), and 536–554 (FMVH…LILL). Residues Cys-578 and Cys-587 each coordinate [4Fe-4S] cluster. Helical transmembrane passes span 594–615 (HVFL…HFSW) and 669–691 (LSAY…MFLF). His-680 serves as a coordination point for chlorophyll a'. Residues Met-688 and Tyr-696 each coordinate chlorophyll a. Trp-697 contributes to the phylloquinone binding site. A helical membrane pass occupies residues 729–749 (AVGVAHYLLGGIATTWAFFLA).

This sequence belongs to the PsaA/PsaB family. In terms of assembly, the PsaA/B heterodimer binds the P700 chlorophyll special pair and subsequent electron acceptors. PSI consists of a core antenna complex that captures photons, and an electron transfer chain that converts photonic excitation into a charge separation. The cyanobacterial PSI reaction center is composed of one copy each of PsaA,B,C,D,E,F,I,J,K,L,M and X, and forms trimeric complexes. PSI electron transfer chain: 5 chlorophyll a, 1 chlorophyll a', 2 phylloquinones and 3 4Fe-4S clusters. PSI core antenna: 90 chlorophyll a, 22 carotenoids, 3 phospholipids and 1 galactolipid. P700 is a chlorophyll a/chlorophyll a' dimer, A0 is one or more chlorophyll a, A1 is one or both phylloquinones and FX is a shared 4Fe-4S iron-sulfur center. serves as cofactor.

It localises to the cellular thylakoid membrane. The catalysed reaction is reduced [plastocyanin] + hnu + oxidized [2Fe-2S]-[ferredoxin] = oxidized [plastocyanin] + reduced [2Fe-2S]-[ferredoxin]. Its function is as follows. PsaA and PsaB bind P700, the primary electron donor of photosystem I (PSI), as well as the electron acceptors A0, A1 and FX. PSI is a plastocyanin/cytochrome c6-ferredoxin oxidoreductase, converting photonic excitation into a charge separation, which transfers an electron from the donor P700 chlorophyll pair to the spectroscopically characterized acceptors A0, A1, FX, FA and FB in turn. Oxidized P700 is reduced on the lumenal side of the thylakoid membrane by plastocyanin or cytochrome c6. This is Photosystem I P700 chlorophyll a apoprotein A1 from Thermostichus vulcanus (Synechococcus vulcanus).